Here is a 269-residue protein sequence, read N- to C-terminus: Tryptophan synthase alpha chain (269 aa).

Residues Glu-49 and Asp-60 each act as proton acceptor in the active site.

Belongs to the TrpA family. As to quaternary structure, tetramer of two alpha and two beta chains.

The catalysed reaction is (1S,2R)-1-C-(indol-3-yl)glycerol 3-phosphate + L-serine = D-glyceraldehyde 3-phosphate + L-tryptophan + H2O. Its pathway is amino-acid biosynthesis; L-tryptophan biosynthesis; L-tryptophan from chorismate: step 5/5. Functionally, the alpha subunit is responsible for the aldol cleavage of indoleglycerol phosphate to indole and glyceraldehyde 3-phosphate. The polypeptide is Tryptophan synthase alpha chain (Actinobacillus pleuropneumoniae serotype 5b (strain L20)).